Consider the following 492-residue polypeptide: Zn(2)-C6 fungal-type transcription factor (492 aa).

A DNA-binding region (zn(2)-C6 fungal-type) is located at residues 14-41 (CRRCKNRKIKCDEVHPRCGNCAKHGVPC). Residues 58-119 (TSTESVGAPT…QPSISSSTNT (62 aa)) are disordered. Low complexity predominate over residues 78-95 (SAPRTPLTRPRAPSSPAR). The residue at position 82 (Thr-82) is a Phosphothreonine. Phosphoserine is present on residues Ser-92 and Ser-102. Positions 107–119 (VYSQPSISSSTNT) are enriched in polar residues. The residue at position 217 (Thr-217) is a Phosphothreonine. Ser-305 carries the post-translational modification Phosphoserine.

Interacts with HOG1. In terms of processing, phosphorylation at Thr-82, Ser-92, Ser-102, thr-117 and ser-305 by HOG1 is required for regulating expression of ergosterol biosynthesis genes.

It localises to the nucleus. Functionally, transcription factor that targets gene promoters containing 2 conserved CGAA repeat sequences. Positively regulates the expression of ergosterol biosynthesis genes including CYP51A and CYP51B encoding the sterol 14-alpha demethylase, and ERG6A and ERG6B encoding the sterol 24-C-methyltransferase. This Gibberella zeae (strain ATCC MYA-4620 / CBS 123657 / FGSC 9075 / NRRL 31084 / PH-1) (Wheat head blight fungus) protein is Zn(2)-C6 fungal-type transcription factor.